Reading from the N-terminus, the 274-residue chain is Oxidoreductase BOA17 (274 aa).

Positions 14, 32, 57, 84, and 117 each coordinate NADP(+). Residues Ser-135 and Tyr-149 each act as proton donor in the active site. Tyr-149, Lys-153, Ile-182, and Thr-184 together coordinate NADP(+). Lys-153 serves as the catalytic Lowers pKa of active site Tyr.

This sequence belongs to the short-chain dehydrogenases/reductases (SDR) family.

It functions in the pathway polyketide biosynthesis. Oxidoreductase; part of the gene cluster B that mediates the biosynthesis of botcinic acid and its botcinin derivatives, acetate-derived polyketides that contribute to virulence when combined with the sesquiterpene botrydial. Botcinic acid and its derivatives have been shown to induce chlorosis and necrosis during host plant infection, but also have antifungal activities. Two polyketide synthases, BOA6 and BOA9, are involved in the biosynthesis of botcinins. BOA6 mediates the formation of the per-methylated tetraketide core by condensation of four units of malonyl-CoA with one unit of acetyl-CoA, which would be methylated in activated methylene groups to yield a bicyclic acid intermediate that could then either be converted to botrylactone derivatives or lose the starter acetate unit through a retro-Claisen type C-C bond cleavage to yield botcinin derivatives. The second polyketide synthase, BOA9, is probably required for the biosynthesis of the tetraketide side chain of botcinins. The methyltransferase (MT) domain within BOA6 is probably responsible for the incorporation of four methyl groups. The trans-enoyl reductase BOA5 might take over the enoyl reductase function of BOA6 that misses an ER domain. The monooxygenases BOA2, BOA3 and BOA4 might be involved in further hydroxylations at C4, C5 and C8, whereas BOA7, close to BOA9, could potentially be involved in the hydroxylation at C4 in the side chain of botcinins. This is Oxidoreductase BOA17 from Botryotinia fuckeliana (strain B05.10) (Noble rot fungus).